Consider the following 145-residue polypeptide: UPF0102 protein BAV3162 (145 aa).

It belongs to the UPF0102 family.

This Bordetella avium (strain 197N) protein is UPF0102 protein BAV3162.